The chain runs to 85 residues: uncharacterized protein (85 aa).

The interval 35 to 85 is disordered; sequence SDKDAPFSTQALTRSKSKRKRSALPVANGLKKPTRSIKRPSRGERLSATTI.

This is an uncharacterized protein from Pasteurella multocida (strain Pm70).